The sequence spans 1023 residues: Probable histidine kinase 3 (1023 aa).

The Cytoplasmic portion of the chain corresponds to 1 to 80 (MDEMSCGGGG…RGWRVVRETW (80 aa)). A helical membrane pass occupies residues 81-101 (WWVLLLWILAGSLGSFYLFLF). Topologically, residues 102 to 387 (MNAQSLDKRR…CRFEKKPPWP (286 aa)) are extracellular. The 202-residue stretch at 151 to 352 (TPSAIDQMTF…TNESPISMYG (202 aa)) folds into the CHASE domain. Residues 388-408 (WLAITSSFGTLVIALLTGHIF) form a helical membrane-spanning segment. The Cytoplasmic portion of the chain corresponds to 409 to 1023 (QATVHRIAKV…RFFQNHDQVE (615 aa)). The region spanning 445–715 (TVSHEIRTPM…TFTFTAVLMR (271 aa)) is the Histidine kinase domain. Histidine 448 carries the post-translational modification Phosphohistidine; by autocatalysis. Response regulatory domains are found at residues 732-854 (NALV…RRAL) and 880-1016 (QIIV…ARFF). At aspartate 783 the chain carries 4-aspartylphosphate. A disordered region spans residues 812–831 (LFLLGSSASSPKGGSDTSRE). Residues 817 to 827 (SSASSPKGGSD) show a composition bias toward polar residues. Aspartate 930 is subject to 4-aspartylphosphate.

Activation probably requires a transfer of a phosphate group between a His in the transmitter domain and an Asp of the receiver domain.

The protein resides in the cell membrane. It carries out the reaction ATP + protein L-histidine = ADP + protein N-phospho-L-histidine.. Functionally, cytokinin receptor related to bacterial two-component regulators. Functions as a histidine kinase and transmits the stress signal to a downstream MAPK cascade. The chain is Probable histidine kinase 3 from Oryza sativa subsp. indica (Rice).